A 1234-amino-acid chain; its full sequence is Chromosome-associated kinesin KIF4B (1234 aa).

Positions 9-336 (PVRVALRCRP…LRYADRARKI (328 aa)) constitute a Kinesin motor domain. 88 to 95 (GQTGSGKT) contributes to the ATP binding site. Positions 350 to 999 (ELNHLKQQVQ…IKQKLILLQV (650 aa)) form a coiled coil. Position 394 is a phosphoserine (serine 394). Disordered regions lie at residues 494 to 513 (EEAQ…AFTT) and 712 to 737 (KRLK…HGKE). The span at 498–513 (VETSPETSRSSDAFTT) shows a compositional bias: polar residues. The segment at 663-1234 (QWKQKKDKEV…GCSPIEEEAH (572 aa)) is interaction with PRC1. Positions 713–737 (RLKDALQKQREVTDKRKETQSHGKE) are enriched in basic and acidic residues. The short motif at 793–798 (PKLRKC) is the Nuclear localization signal element. Threonine 799 carries the phosphothreonine modification. A phosphoserine mark is found at serine 801, serine 951, serine 1001, serine 1013, serine 1017, and serine 1028. The globular stretch occupies residues 1000–1234 (ASRQKHLPND…GCSPIEEEAH (235 aa)). 4 disordered regions span residues 1007-1030 (PNDT…PSRV), 1052-1076 (VNEH…KPTK), 1122-1143 (RQQG…GSFK), and 1183-1234 (TAPA…EEAH). Over residues 1056-1071 (EDGDGDGDSDEGDDEE) the composition is skewed to acidic residues. The CRD; required for [4Fe-4S] cluster binding and localization to the spindle midzone and midbody during anaphase and telophase stretch occupies residues 1086 to 1144 (QGCSCKGWCGNKQCGCRKQKSDCGVDCSCDPTKCRNRQQGKDSLGTVEQTQDSEGSFKL). The residue at position 1128 (serine 1128) is a Phosphoserine. A Phosphothreonine modification is found at threonine 1183. The residue at position 1188 (serine 1188) is a Phosphoserine. Lysine 1196 participates in a covalent cross-link: Glycyl lysine isopeptide (Lys-Gly) (interchain with G-Cter in SUMO2). Serine 1227 carries the phosphoserine modification.

This sequence belongs to the TRAFAC class myosin-kinesin ATPase superfamily. Kinesin family. Chromokinesin subfamily. [2Fe-2S] cluster is required as a cofactor. [4Fe-4S] cluster serves as cofactor. In terms of tissue distribution, specifically expressed in testis.

It localises to the nucleus matrix. The protein resides in the cytoplasm. Its subcellular location is the cytoskeleton. Its function is as follows. Iron-sulfur (Fe-S) cluster binding motor protein that has a role in chromosome segregation during mitosis. Translocates PRC1 to the plus ends of interdigitating spindle microtubules during the metaphase to anaphase transition, an essential step for the formation of an organized central spindle midzone and midbody and for successful cytokinesis. May play a role in mitotic chromosomal positioning and bipolar spindle stabilization. This chain is Chromosome-associated kinesin KIF4B (KIF4B), found in Homo sapiens (Human).